A 154-amino-acid chain; its full sequence is Crossover junction endodeoxyribonuclease RuvC (154 aa).

Catalysis depends on residues Asp-7, Glu-67, and Asp-139. Asp-7, Glu-67, and Asp-139 together coordinate Mg(2+).

This sequence belongs to the RuvC family. As to quaternary structure, homodimer which binds Holliday junction (HJ) DNA. The HJ becomes 2-fold symmetrical on binding to RuvC with unstacked arms; it has a different conformation from HJ DNA in complex with RuvA. In the full resolvosome a probable DNA-RuvA(4)-RuvB(12)-RuvC(2) complex forms which resolves the HJ. The cofactor is Mg(2+).

It is found in the cytoplasm. It catalyses the reaction Endonucleolytic cleavage at a junction such as a reciprocal single-stranded crossover between two homologous DNA duplexes (Holliday junction).. Functionally, the RuvA-RuvB-RuvC complex processes Holliday junction (HJ) DNA during genetic recombination and DNA repair. Endonuclease that resolves HJ intermediates. Cleaves cruciform DNA by making single-stranded nicks across the HJ at symmetrical positions within the homologous arms, yielding a 5'-phosphate and a 3'-hydroxyl group; requires a central core of homology in the junction. The consensus cleavage sequence is 5'-(A/T)TT(C/G)-3'. Cleavage occurs on the 3'-side of the TT dinucleotide at the point of strand exchange. HJ branch migration catalyzed by RuvA-RuvB allows RuvC to scan DNA until it finds its consensus sequence, where it cleaves and resolves the cruciform DNA. In Prochlorococcus marinus (strain MIT 9303), this protein is Crossover junction endodeoxyribonuclease RuvC.